A 323-amino-acid chain; its full sequence is Ribose 1,5-bisphosphate isomerase (323 aa).

Residues 22 to 25 and arginine 65 contribute to the substrate site; that span reads RGAA. Cysteine 130 (proton acceptor) is an active-site residue. Aspartate 199 acts as the Proton donor in catalysis. Substrate is bound by residues 209–210 and lysine 235; that span reads NK. Residue lysine 210 forms a Glycyl lysine isopeptide (Lys-Gly) (interchain with G-Cter in SAMP2) linkage.

Belongs to the eIF-2B alpha/beta/delta subunits family. R15P isomerase subfamily.

The catalysed reaction is alpha-D-ribose 1,5-bisphosphate = D-ribulose 1,5-bisphosphate. Catalyzes the isomerization of ribose 1,5-bisphosphate (R15P) to ribulose 1,5-bisphosphate (RuBP), the CO(2) acceptor and substrate for RubisCO. Functions in an archaeal AMP degradation pathway, together with AMP phosphorylase and RubisCO. This Haloferax volcanii (strain ATCC 29605 / DSM 3757 / JCM 8879 / NBRC 14742 / NCIMB 2012 / VKM B-1768 / DS2) (Halobacterium volcanii) protein is Ribose 1,5-bisphosphate isomerase.